A 224-amino-acid chain; its full sequence is Toxin coregulated pilin (224 aa).

Residues 1-25 constitute a propeptide, atypical leader sequence; that stretch reads MQLLKQLFKKKFVKEEHDKKTGQEG. Residue methionine 26 is modified to N-methylmethionine. The helical transmembrane segment at 26–46 threads the bilayer; it reads MTLLEVIIVLGIMGVVSAGVV. Cysteines 145 and 211 form a disulfide.

It localises to the fimbrium. It is found in the membrane. In terms of biological role, major component of the toxin co-regulated pilus (tcp) which is a type IV pilus essential for bacterial aggregation and subsequent colonization in the host small intestine. The polypeptide is Toxin coregulated pilin (tcpA) (Vibrio cholerae serotype O1 (strain ATCC 39315 / El Tor Inaba N16961)).